Here is a 214-residue protein sequence, read N- to C-terminus: Thymidylate kinase (214 aa).

10–17 (GPDGAGKT) provides a ligand contact to ATP.

This sequence belongs to the thymidylate kinase family.

It carries out the reaction dTMP + ATP = dTDP + ADP. Functionally, phosphorylation of dTMP to form dTDP in both de novo and salvage pathways of dTTP synthesis. This is Thymidylate kinase from Levilactobacillus brevis (strain ATCC 367 / BCRC 12310 / CIP 105137 / JCM 1170 / LMG 11437 / NCIMB 947 / NCTC 947) (Lactobacillus brevis).